The chain runs to 631 residues: Chaperone protein DnaK (631 aa).

At Thr198 the chain carries Phosphothreonine; by autocatalysis. The interval 598–631 is disordered; that stretch reads YSAQQGGEQPGAAKKDDVVDAEFTEVDDDKKKSA.

The protein belongs to the heat shock protein 70 family.

In terms of biological role, acts as a chaperone. The sequence is that of Chaperone protein DnaK from Azorhizobium caulinodans (strain ATCC 43989 / DSM 5975 / JCM 20966 / LMG 6465 / NBRC 14845 / NCIMB 13405 / ORS 571).